We begin with the raw amino-acid sequence, 115 residues long: uncharacterized protein (115 aa).

The chain crosses the membrane as a helical span at residues 36 to 56 (SFFSLGLIACFCIFLIIVLSE).

Its subcellular location is the membrane. This is an uncharacterized protein from Saccharomyces cerevisiae (strain ATCC 204508 / S288c) (Baker's yeast).